We begin with the raw amino-acid sequence, 260 residues long: Carbonic anhydrase 3 (260 aa).

A2 is subject to N-acetylalanine. Positions 3 to 259 constitute an Alpha-carbonic anhydrase domain; it reads KEWGYASHNG…IKGRVVRASF (257 aa). Phosphoserine is present on residues S29, S43, S48, S50, and S55. Residues 64–67 are involved in proton transfer; sequence KTCR. Phosphothreonine is present on T73. The Zn(2+) site is built by H94, H96, and H119. At Y127 the chain carries Phosphotyrosine. T129 carries the phosphothreonine modification. C182 and C187 each carry S-glutathionyl cysteine. Residue 198-199 participates in substrate binding; it reads TT. A Phosphothreonine modification is found at T216. S219 carries the phosphoserine modification.

The protein belongs to the alpha-carbonic anhydrase family. The cofactor is Zn(2+). S-thiolated both by thiol-disulfide exchange with glutathione disulfide and by oxyradical-initiated S-thiolation with reduced glutathione. Post-translationally, S-glutathionylated in hepatocytes under oxidative stress. In terms of tissue distribution, expressed in liver and muscle.

Its subcellular location is the cytoplasm. It catalyses the reaction hydrogencarbonate + H(+) = CO2 + H2O. With respect to regulation, inhibited by acetazolamide. Functionally, reversible hydration of carbon dioxide. This chain is Carbonic anhydrase 3 (Ca3), found in Rattus norvegicus (Rat).